The following is a 50-amino-acid chain: Protein PsbN (50 aa).

Residues 14–34 (IAVTILALLLALTGFGLWTAF) form a helical membrane-spanning segment.

This sequence belongs to the PsbN family.

The protein localises to the cellular thylakoid membrane. In terms of biological role, may play a role in photosystem I and II biogenesis. This Prochlorococcus marinus (strain MIT 9301) protein is Protein PsbN.